A 359-amino-acid polypeptide reads, in one-letter code: 3-dehydroquinate synthase (359 aa).

Residues 71 to 76 (DGEQFK), 105 to 109 (GVIGD), 129 to 130 (TT), Lys142, Lys151, and 169 to 172 (CLQT) each bind NAD(+). Residues Glu184, His247, and His264 each contribute to the Zn(2+) site.

The protein belongs to the sugar phosphate cyclases superfamily. Dehydroquinate synthase family. The cofactor is Co(2+). Requires Zn(2+) as cofactor. It depends on NAD(+) as a cofactor.

It localises to the cytoplasm. The catalysed reaction is 7-phospho-2-dehydro-3-deoxy-D-arabino-heptonate = 3-dehydroquinate + phosphate. Its pathway is metabolic intermediate biosynthesis; chorismate biosynthesis; chorismate from D-erythrose 4-phosphate and phosphoenolpyruvate: step 2/7. Functionally, catalyzes the conversion of 3-deoxy-D-arabino-heptulosonate 7-phosphate (DAHP) to dehydroquinate (DHQ). The sequence is that of 3-dehydroquinate synthase from Shewanella sp. (strain MR-4).